We begin with the raw amino-acid sequence, 78 residues long: Protein SlyX homolog (78 aa).

This sequence belongs to the SlyX family.

In Xanthomonas oryzae pv. oryzae (strain MAFF 311018), this protein is Protein SlyX homolog.